The chain runs to 599 residues: Dachshund homolog 2 (599 aa).

Residues 69-155 (RMVDMHGMKV…LITRKDFETL (87 aa)) are DACHbox-N. Disordered stretches follow at residues 166-186 (RQMT…PKRS), 237-280 (LQGN…GPQH), and 370-409 (RIPE…MDHH). The span at 237-262 (LQGNGSQNGTESEPDDLNSNTGGSES) shows a compositional bias: polar residues. Residues 389–405 (SQTSSHTSSSVSSSPSQ) show a composition bias toward low complexity. The DACHbox-C stretch occupies residues 453–533 (SSVETLLTNI…KTKRKLQEAL (81 aa)). Residues 459-554 (LTNIQGLLKV…QALKQATTSD (96 aa)) adopt a coiled-coil conformation.

The protein belongs to the DACH/dachshund family. Interacts with SIX6 and EYA2.

Its subcellular location is the nucleus. Functionally, transcription factor that is involved in regulation of organogenesis. Seems to be a regulator for SIX1 and SIX6. Seems to act as a corepressor of SIX6 in regulating proliferation by directly repressing cyclin-dependent kinase inhibitors, including the p27Kip1 promoter. Is recruited with SIX6 to the p27Kip1 promoter in embryonal retina. SIX6 corepression also seems to involve NCOR1, TBL1, HDAC1 and HDAC3. May be involved together with PAX3, SIX1, and EYA2 in regulation of myogenesis. In the developing somite, expression of DACH2 and PAX3 is regulated by the overlying ectoderm, and DACH2 and PAX3 positively regulate each other's expression. Probably binds to DNA via its DACHbox-N domain. This is Dachshund homolog 2 (DACH2) from Homo sapiens (Human).